Consider the following 1004-residue polypeptide: 2-oxoglutarate dehydrogenase E1 component (1004 aa).

Belongs to the alpha-ketoglutarate dehydrogenase family. As to quaternary structure, homodimer. Part of the 2-oxoglutarate dehydrogenase (OGDH) complex composed of E1 (2-oxoglutarate dehydrogenase), E2 (dihydrolipoamide succinyltransferase) and E3 (dihydrolipoamide dehydrogenase); the complex contains multiple copies of the three enzymatic components (E1, E2 and E3). Thiamine diphosphate serves as cofactor.

The catalysed reaction is N(6)-[(R)-lipoyl]-L-lysyl-[protein] + 2-oxoglutarate + H(+) = N(6)-[(R)-S(8)-succinyldihydrolipoyl]-L-lysyl-[protein] + CO2. Functionally, E1 component of the 2-oxoglutarate dehydrogenase (OGDH) complex which catalyzes the decarboxylation of 2-oxoglutarate, the first step in the conversion of 2-oxoglutarate to succinyl-CoA and CO(2). In Brucella canis (strain ATCC 23365 / NCTC 10854 / RM-666), this protein is 2-oxoglutarate dehydrogenase E1 component.